Reading from the N-terminus, the 256-residue chain is MKWKEQAIILGTRQYGETSVILEVMTRQHGRYMGVVKGGRSRRMAVLLQPGNFVEAEWWARLDEHLGLFRLEALDLHAARLILFPEALYALQLIVFHLHLLPERDPHPILYDILHLFMQSFDEPFINAELLVRFEMRFLEELGFGLDLSRCAATGRLEKLCYVSPKSGRAVCEEAGHPWREKLLNLPQFLVQRTVRPVDFSDIKNGFILTGFFLMRHVWEPRNIKQPSVRISLIQLFEQRFRMQASFVDLKTINRM.

The protein belongs to the RecO family.

In terms of biological role, involved in DNA repair and RecF pathway recombination. This chain is DNA repair protein RecO, found in Bartonella henselae (strain ATCC 49882 / DSM 28221 / CCUG 30454 / Houston 1) (Rochalimaea henselae).